An 88-amino-acid polypeptide reads, in one-letter code: DNA-directed RNA polymerase subunit omega (88 aa).

Belongs to the RNA polymerase subunit omega family. The RNAP catalytic core consists of 2 alpha, 1 beta, 1 beta' and 1 omega subunit. When a sigma factor is associated with the core the holoenzyme is formed, which can initiate transcription.

The catalysed reaction is RNA(n) + a ribonucleoside 5'-triphosphate = RNA(n+1) + diphosphate. Its function is as follows. Promotes RNA polymerase assembly. Latches the N- and C-terminal regions of the beta' subunit thereby facilitating its interaction with the beta and alpha subunits. The protein is DNA-directed RNA polymerase subunit omega of Anaeromyxobacter sp. (strain Fw109-5).